A 243-amino-acid chain; its full sequence is Zinc import ATP-binding protein ZnuC (243 aa).

The ABC transporter domain maps to 8–225; sequence LNLSNVSYYI…SEFQKLFGHH (218 aa). 40-47 contributes to the ATP binding site; sequence GPNGAGKS.

Belongs to the ABC transporter superfamily. Zinc importer (TC 3.A.1.15.5) family. As to quaternary structure, the complex is composed of two ATP-binding proteins (ZnuC), two transmembrane proteins (ZnuB) and a solute-binding protein (ZnuA).

The protein resides in the cell inner membrane. It carries out the reaction Zn(2+)(out) + ATP(in) + H2O(in) = Zn(2+)(in) + ADP(in) + phosphate(in) + H(+)(in). In terms of biological role, part of the ABC transporter complex ZnuABC involved in zinc import. Responsible for energy coupling to the transport system. The protein is Zinc import ATP-binding protein ZnuC of Psychrobacter cryohalolentis (strain ATCC BAA-1226 / DSM 17306 / VKM B-2378 / K5).